Here is a 203-residue protein sequence, read N- to C-terminus: Small ribosomal subunit protein uS4 (203 aa).

Residues 93–173 enclose the S4 RNA-binding domain; the sequence is RRLDNVVFRS…FPSWIQVDKA (81 aa).

It belongs to the universal ribosomal protein uS4 family. In terms of assembly, part of the 30S ribosomal subunit. Contacts protein S5. The interaction surface between S4 and S5 is involved in control of translational fidelity.

Its function is as follows. One of the primary rRNA binding proteins, it binds directly to 16S rRNA where it nucleates assembly of the body of the 30S subunit. Functionally, with S5 and S12 plays an important role in translational accuracy. The chain is Small ribosomal subunit protein uS4 from Chlorobium limicola (strain DSM 245 / NBRC 103803 / 6330).